Consider the following 726-residue polypeptide: Catalase-peroxidase (726 aa).

The N-terminal stretch at 1-16 (MDNPTDSAGKCPVAHG) is a signal peptide. The interval 1–26 (MDNPTDSAGKCPVAHGNTPRSRSNRD) is disordered. The tryptophyl-tyrosyl-methioninium (Trp-Tyr) (with M-244) cross-link spans 96–218 (WHSAGTYRIT…LGAVQMGLIY (123 aa)). His97 acts as the Proton acceptor in catalysis. Residues 218-244 (YVNPEGPNGTPDPLASARDIRETFARM) constitute a cross-link (tryptophyl-tyrosyl-methioninium (Tyr-Met) (with W-96)). A heme b-binding site is contributed by His259.

Belongs to the peroxidase family. Peroxidase/catalase subfamily. As to quaternary structure, homodimer or homotetramer. Requires heme b as cofactor. In terms of processing, formation of the three residue Trp-Tyr-Met cross-link is important for the catalase, but not the peroxidase activity of the enzyme.

It carries out the reaction H2O2 + AH2 = A + 2 H2O. The enzyme catalyses 2 H2O2 = O2 + 2 H2O. Bifunctional enzyme with both catalase and broad-spectrum peroxidase activity. The sequence is that of Catalase-peroxidase from Rhizobium johnstonii (strain DSM 114642 / LMG 32736 / 3841) (Rhizobium leguminosarum bv. viciae).